We begin with the raw amino-acid sequence, 757 residues long: RNA-directed RNA polymerase catalytic subunit (757 aa).

The disordered stretch occupies residues 50–82; that stretch reads SEKGKWTTNTETGAPQLNPIDGPLPEDNEPSGY. A compositionally biased stretch (polar residues) spans 55-64; sequence WTTNTETGAP. 2 short sequence motifs (nuclear localization signal) span residues 187-195 and 203-216; these read RKRRVRDNM and RTIG…NKRI. Residues 249-256 are promoter-binding site; the sequence is RGFVYFVE. The RdRp catalytic domain maps to 286–483; that stretch reads VRKMMTNSQD…GINMSKKKSY (198 aa).

The protein belongs to the influenza viruses polymerase PB1 family. Influenza RNA polymerase is composed of three subunits: PB1, PB2 and PA. Interacts (via N-terminus) with PA (via C-terminus). Interacts (via C-terminus) with PB2 (via N-terminus); this interaction is essential for transcription initiation. In terms of processing, phosphorylated by host PRKCA.

It is found in the host nucleus. The protein localises to the host cytoplasm. It carries out the reaction RNA(n) + a ribonucleoside 5'-triphosphate = RNA(n+1) + diphosphate. In terms of biological role, RNA-dependent RNA polymerase which is responsible for replication and transcription of virus RNA segments. The transcription of viral mRNAs occurs by a unique mechanism called cap-snatching. 5' methylated caps of cellular mRNAs are cleaved after 10-13 nucleotides by PA. In turn, these short capped RNAs are used as primers by PB1 for transcription of viral mRNAs. During virus replication, PB1 initiates RNA synthesis and copy vRNA into complementary RNA (cRNA) which in turn serves as a template for the production of more vRNAs. The protein is RNA-directed RNA polymerase catalytic subunit of Influenza A virus (strain A/Leningrad/134/47/1957 H2N2).